The primary structure comprises 800 residues: DNA topoisomerase 4 subunit A (800 aa).

One can recognise a Topo IIA-type catalytic domain in the interval 31-495 (LPDVRDGLKP…EIEEIKIDKE (465 aa)). The active-site O-(5'-phospho-DNA)-tyrosine intermediate is the tyrosine 119.

Belongs to the type II topoisomerase GyrA/ParC subunit family. ParC type 2 subfamily. In terms of assembly, heterotetramer composed of ParC and ParE.

Its subcellular location is the cell membrane. It catalyses the reaction ATP-dependent breakage, passage and rejoining of double-stranded DNA.. Topoisomerase IV is essential for chromosome segregation. It relaxes supercoiled DNA. Performs the decatenation events required during the replication of a circular DNA molecule. This chain is DNA topoisomerase 4 subunit A, found in Staphylococcus aureus (strain N315).